A 692-amino-acid polypeptide reads, in one-letter code: 5-taurinomethyluridine-[tRNA] synthase subunit MTO1, mitochondrial (692 aa).

A mitochondrion-targeting transit peptide spans 1-25 (MFYFRGCGRWVAASFTKLQFPLARL). Residues 43 to 48 (GGGHAG), Val-155, Ser-218, and Gln-407 contribute to the FAD site. Lys-508 is modified (N6-methyllysine).

This sequence belongs to the MnmG family. In terms of assembly, homodimer; forms a dimer in the presence of potassium. Interacts with GTPBP3; forms the GTPBP3-MTO1 complex composed of homodimers of GTPBP3 and MTO1. It depends on FAD as a cofactor.

The protein resides in the mitochondrion. The enzyme catalyses 5,10-methylenetetrahydrofolate + uridine(34) in tRNA + taurine + GTP + A + H2O = 5-taurinomethyluridine(34) in tRNA + 7,8-dihydrofolate + GDP + AH2 + phosphate + H(+). Functionally, component of the GTPBP3-MTO1 complex that catalyzes the 5-taurinomethyluridine (taum(5)U) modification at the 34th wobble position (U34) of mitochondrial tRNAs (mt-tRNAs), which plays a role in mt-tRNA decoding and mitochondrial translation. Taum(5)U formation on mammalian mt-tRNA requires the presence of both GTPBP3-mediated GTPase activity and MTO1 catalytic activity. This Pongo abelii (Sumatran orangutan) protein is 5-taurinomethyluridine-[tRNA] synthase subunit MTO1, mitochondrial (MTO1).